Reading from the N-terminus, the 355-residue chain is Probable nitronate monooxygenase (355 aa).

FMN-binding positions include Asn-71, Gln-175, Gly-180, Gly-218, and 237-240; that span reads QMGT.

This sequence belongs to the nitronate monooxygenase family. NMO class I subfamily. The cofactor is FMN.

The enzyme catalyses 3 propionate 3-nitronate + 3 O2 + H2O = 3 3-oxopropanoate + 2 nitrate + nitrite + H2O2 + 3 H(+). Functionally, nitronate monooxygenase that uses molecular oxygen to catalyze the oxidative denitrification of alkyl nitronates. Acts on propionate 3-nitronate (P3N), the presumed physiological substrate. Probably functions in the detoxification of P3N, a metabolic poison produced by plants and fungi as a defense mechanism. The chain is Probable nitronate monooxygenase from Staphylococcus aureus (strain USA300).